A 172-amino-acid polypeptide reads, in one-letter code: Small ribosomal subunit protein uS5 (172 aa).

Residues 17-80 form the S5 DRBM domain; that stretch reads LREKMISVNR…EQARRNMFKV (64 aa).

Belongs to the universal ribosomal protein uS5 family. As to quaternary structure, part of the 30S ribosomal subunit. Contacts proteins S4 and S8.

With S4 and S12 plays an important role in translational accuracy. In terms of biological role, located at the back of the 30S subunit body where it stabilizes the conformation of the head with respect to the body. The protein is Small ribosomal subunit protein uS5 of Burkholderia orbicola (strain AU 1054).